A 318-amino-acid chain; its full sequence is MNGDHMVLGSSVTDKKAIILVTILLLLRLVAIAGNGFITAALGVEWVLRRMLLPCDKLLVSLGASHFCLQSVVMGKTIYVFLYPMAFPYNPVLQFLAFQWDFLNAATLWFSTWLSVFYCVKIATFTHPVFFWLKHKLSGWLPWMIFSYVGLSSFTTILFFIGNHRMYQNYLKNHLQPWNVTGNSIRSYCEKFYLFPLKMITWTMPTAVFFICMILLITSLGRHMKKALLTTSGFREPSVQAHIKALLALLSFAMLFISYFLSLVFSAAGIFPPLDFKFWVWESVIYLCAAVHPIILLFSNCRLRAVLKSRRSSRCGTP.

Residues Met1–Val7 are Extracellular-facing. A helical membrane pass occupies residues Leu8 to Arg28. The Cytoplasmic segment spans residues Leu29 to Ala40. A helical membrane pass occupies residues Ala41–Ser61. The Extracellular portion of the chain corresponds to Leu62–Pro88. Residues Tyr89–Trp109 form a helical membrane-spanning segment. Residues Phe110 to Pro128 lie on the Cytoplasmic side of the membrane. The chain crosses the membrane as a helical span at residues Val129–Val149. Topologically, residues Gly150–Asn183 are extracellular. Residue Asn179 is glycosylated (N-linked (GlcNAc...) asparagine). The chain crosses the membrane as a helical span at residues Ser184–Met204. The Cytoplasmic portion of the chain corresponds to Pro205 to Phe234. Residues Arg235–Leu255 traverse the membrane as a helical segment. The Extracellular portion of the chain corresponds to Phe256 to Val264. The chain crosses the membrane as a helical span at residues Phe265 to Ile285. At Tyr286–Pro318 the chain is on the cytoplasmic side.

This sequence belongs to the G-protein coupled receptor T2R family.

Its subcellular location is the membrane. Functionally, receptor that may play a role in the perception of bitterness and is gustducin-linked. May play a role in sensing the chemical composition of the gastrointestinal content. The activity of this receptor may stimulate alpha gustducin, mediate PLC-beta-2 activation and lead to the gating of TRPM5. The polypeptide is Taste receptor type 2 member 60 (TAS2R60) (Pan paniscus (Pygmy chimpanzee)).